The following is a 139-amino-acid chain: Translation initiation factor 2 subunit beta (139 aa).

This sequence belongs to the eIF-2-beta/eIF-5 family. Heterotrimer composed of an alpha, a beta and a gamma chain.

Functionally, eIF-2 functions in the early steps of protein synthesis by forming a ternary complex with GTP and initiator tRNA. The chain is Translation initiation factor 2 subunit beta from Nanoarchaeum equitans (strain Kin4-M).